The primary structure comprises 121 residues: Neuropeptide-like protein 7 (121 aa).

The signal sequence occupies residues 1 to 22 (MYIKAALLIVVLFGVASQITSA).

In terms of biological role, may regulate lifespan in response to food availability and oxidative stress. The protein is Neuropeptide-like protein 7 of Caenorhabditis elegans.